Here is a 299-residue protein sequence, read N- to C-terminus: GTPase Era (299 aa).

Residues 5-175 enclose the Era-type G domain; that stretch reads RSGFVCFVGR…TNVLVSQLPP (171 aa). The segment at 13 to 20 is G1; the sequence is GRPNTGKS. 13–20 lines the GTP pocket; that stretch reads GRPNTGKS. Residues 39–43 are G2; sequence QTTRH. The tract at residues 60–63 is G3; the sequence is DTPG. Residues 60–64 and 124–127 contribute to the GTP site; these read DTPGL and TKID. The segment at 124–127 is G4; sequence TKID. Residues 154-156 are G5; it reads VSA. One can recognise a KH type-2 domain in the interval 206-285; it reads VRDELPHSLA…YLDLRVKIAK (80 aa).

This sequence belongs to the TRAFAC class TrmE-Era-EngA-EngB-Septin-like GTPase superfamily. Era GTPase family. In terms of assembly, monomer. Stays in the monomer conformation, irrespective of the presence of GTP.

It localises to the cell envelope. Its subcellular location is the secreted. The protein localises to the cell wall. With respect to regulation, co-purified with RNA upon overexpression in E.coli, but RNAs do not appear to influence the GTPase activity. Exhibits GTPase activity. Binds RNA but is probably not involved in ribosome assembly in mycobacteria. Cannot use ATP. This Mycolicibacterium smegmatis (strain ATCC 700084 / mc(2)155) (Mycobacterium smegmatis) protein is GTPase Era.